The chain runs to 446 residues: Putative zinc metalloprotease NMA0084 (446 aa).

Residue H18 participates in Zn(2+) binding. Residue E19 is part of the active site. H22 contributes to the Zn(2+) binding site. The next 3 membrane-spanning stretches (helical) occupy residues 93–115 (IAIV…GLSF), 376–398 (FLAL…LDGG), and 419–438 (NIGL…VAFF). The region spanning 100-181 (PLTNLALAVL…KVAVGVQTAS (82 aa)) is the PDZ domain.

This sequence belongs to the peptidase M50B family. Zn(2+) is required as a cofactor.

The protein resides in the cell inner membrane. This is Putative zinc metalloprotease NMA0084 from Neisseria meningitidis serogroup A / serotype 4A (strain DSM 15465 / Z2491).